The following is a 211-amino-acid chain: MTNCTVLDWQGKEAGESSIDLKTAKESSAADLLHRAVLRQQAHSRQGTASTLTRSEVRGGGRKPYKQKGTGRARQGSIRTPLRPGGGIIFGPKPRKYNLEMNRKERRLALRTALMSRIPDAKIIKDFGSKLEVPKTSEIVALLKRVGIDSDVKILIILNKPSEIIKRSIKNLEKVKLISADQLNVFDLLNANSLVIGEDALSTIKEVYGND.

The interval 40-85 (QQAHSRQGTASTLTRSEVRGGGRKPYKQKGTGRARQGSIRTPLRPG) is disordered. A compositionally biased stretch (polar residues) spans 41-54 (QAHSRQGTASTLTR). The span at 60 to 71 (GGRKPYKQKGTG) shows a compositional bias: basic residues.

It belongs to the universal ribosomal protein uL4 family. Part of the 50S ribosomal subunit.

In terms of biological role, one of the primary rRNA binding proteins, this protein initially binds near the 5'-end of the 23S rRNA. It is important during the early stages of 50S assembly. It makes multiple contacts with different domains of the 23S rRNA in the assembled 50S subunit and ribosome. Forms part of the polypeptide exit tunnel. This Prochlorococcus marinus (strain NATL2A) protein is Large ribosomal subunit protein uL4.